Here is a 277-residue protein sequence, read N- to C-terminus: tRNA U34 carboxymethyltransferase (277 aa).

Carboxy-S-adenosyl-L-methionine-binding positions include K46, W60, K65, G84, D106 to S108, V133 to E134, Y153, and R268.

It belongs to the class I-like SAM-binding methyltransferase superfamily. CmoB family. Homotetramer.

It catalyses the reaction carboxy-S-adenosyl-L-methionine + 5-hydroxyuridine(34) in tRNA = 5-carboxymethoxyuridine(34) in tRNA + S-adenosyl-L-homocysteine + H(+). Catalyzes carboxymethyl transfer from carboxy-S-adenosyl-L-methionine (Cx-SAM) to 5-hydroxyuridine (ho5U) to form 5-carboxymethoxyuridine (cmo5U) at position 34 in tRNAs. This Wolinella succinogenes (strain ATCC 29543 / DSM 1740 / CCUG 13145 / JCM 31913 / LMG 7466 / NCTC 11488 / FDC 602W) (Vibrio succinogenes) protein is tRNA U34 carboxymethyltransferase.